The following is a 93-amino-acid chain: MADITDIKTILYTEKSLNLQEQGVVVIQTSPKMTKTGLKAVLKEYFGVTPKSINSLRMDGKIKRFRGRLGQRNNYKKFYVKLPEGVSLENTEA.

This sequence belongs to the universal ribosomal protein uL23 family. As to quaternary structure, part of the 50S ribosomal subunit. Contacts protein L29, and trigger factor when it is bound to the ribosome.

In terms of biological role, one of the early assembly proteins it binds 23S rRNA. One of the proteins that surrounds the polypeptide exit tunnel on the outside of the ribosome. Forms the main docking site for trigger factor binding to the ribosome. The protein is Large ribosomal subunit protein uL23 of Campylobacter jejuni subsp. jejuni serotype O:2 (strain ATCC 700819 / NCTC 11168).